We begin with the raw amino-acid sequence, 160 residues long: Small ribosomal subunit protein uS9 (160 aa).

This sequence belongs to the universal ribosomal protein uS9 family.

This Xanthobacter autotrophicus (strain ATCC BAA-1158 / Py2) protein is Small ribosomal subunit protein uS9.